Here is a 376-residue protein sequence, read N- to C-terminus: Homocitrate synthase (376 aa).

The region spanning 4–259 (WKIIDSTLRE…RRKYKLEMLP (256 aa)) is the Pyruvate carboxyltransferase domain. 2-oxoglutarate is bound at residue Arg-12. Glu-13 serves as a coordination point for Mg(2+). His-72 contacts 2-oxoglutarate. Asp-92 serves as a coordination point for L-lysine. 2-oxoglutarate is bound at residue Arg-133. 2 residues coordinate L-lysine: Ser-135 and Thr-166. Thr-166 lines the 2-oxoglutarate pocket. 2 residues coordinate Mg(2+): His-195 and His-197. Catalysis depends on His-292, which acts as the Proton acceptor.

It belongs to the alpha-IPM synthase/homocitrate synthase family. Homocitrate synthase LYS20/LYS21 subfamily. As to quaternary structure, exists in an equilibrium between monomer and homodimer. The cofactor is Mg(2+). Mn(2+) is required as a cofactor.

Its subcellular location is the cytoplasm. It carries out the reaction acetyl-CoA + 2-oxoglutarate + H2O = (2R)-homocitrate + CoA + H(+). The catalysed reaction is oxaloacetate + acetyl-CoA + H2O = citrate + CoA + H(+). It participates in amino-acid biosynthesis; L-lysine biosynthesis via AAA pathway; L-alpha-aminoadipate from 2-oxoglutarate: step 1/5. Its activity is regulated as follows. Is highly and competitively inhibited by lysine that binds to the active site and competes with 2-oxoglutarate. Is also slightly inhibited by arginine and 2-aminoethylcysteine. Functionally, catalyzes the aldol-type condensation of 2-oxoglutarate with acetyl-CoA to yield homocitrate. Carries out the first step of the alpha-aminoadipate (AAA) lysine biosynthesis pathway. To a lesser extent, can also use oxaloacetate in place of 2-oxoglutarate, leading to citrate. Does not display 2-isopropylmalate synthase activity since it cannot use 2-oxoisovalerate. The sequence is that of Homocitrate synthase from Thermus thermophilus (strain ATCC BAA-163 / DSM 7039 / HB27).